Consider the following 510-residue polypeptide: Outer spore wall protein 7 (510 aa).

Residues 1–23 form the signal peptide; that stretch reads MKAVFKVTTALLACVFIARYLVC. The tract at residues 167–195 is disordered; sequence FETDSETEDYEDDENENEDEDEDEDEDDV. Acidic residues predominate over residues 169-195; sequence TDSETEDYEDDENENEDEDEDEDEDDV. Position 354 is a phosphotyrosine (Y354).

It belongs to the OSW/SHE family.

Its function is as follows. Involved in spore wall assembly. This chain is Outer spore wall protein 7, found in Saccharomyces cerevisiae (strain ATCC 204508 / S288c) (Baker's yeast).